A 284-amino-acid polypeptide reads, in one-letter code: AA14 family lytic polysaccharide monooxygenase B (284 aa).

A signal peptide spans 1 to 20 (MGYLSKLVTSVVFAIPLASA). N-linked (GlcNAc...) asparagine glycosylation is found at Asn-42, Asn-96, Asn-142, and Asn-183. Cysteines 197 and 218 form a disulfide.

It belongs to the polysaccharide monooxygenase AA14 family. It depends on Cu(2+) as a cofactor.

The protein resides in the secreted. In terms of biological role, lytic polysaccharide monooxygenase (LPMO) that plays decomposes some specific network structures formed between cellulose and hemicellulose in the plant cell walls. Catalysis by LPMOs requires the reduction of the active-site copper from Cu(II) to Cu(I) by a reducing agent and H(2)O(2) or O(2) as a cosubstrate. The chain is AA14 family lytic polysaccharide monooxygenase B from Talaromyces rugulosus (Penicillium rugulosum).